The sequence spans 178 residues: Signal peptidase complex subunit 2 (178 aa).

The Cytoplasmic segment spans residues Met1 to Ala37. A helical transmembrane segment spans residues Leu38–Phe58. Residues Leu59–Gln67 are Lumenal-facing. The helical transmembrane segment at Ile68–Tyr88 threads the bilayer. The Cytoplasmic segment spans residues Phe89–Glu178.

Belongs to the SPCS2 family. In terms of assembly, component of the signal peptidase complex (SPC) composed of a catalytic subunit SEC11 and three accessory subunits SPC1, SPC2 and SPC3. The complex induces a local thinning of the ER membrane which is used to measure the length of the signal peptide (SP) h-region of protein substrates. This ensures the selectivity of the complex towards h-regions shorter than 18-20 amino acids. SPC associates with the translocon complex. Interacts with SBH1 and SEB2/SBH2.

Its subcellular location is the endoplasmic reticulum membrane. In terms of biological role, component of the signal peptidase complex (SPC) which catalyzes the cleavage of N-terminal signal sequences from nascent proteins as they are translocated into the lumen of the endoplasmic reticulum. Enhances the enzymatic activity of SPC and facilitates the interactions between different components of the translocation site. The chain is Signal peptidase complex subunit 2 (SPC2) from Saccharomyces cerevisiae (strain ATCC 204508 / S288c) (Baker's yeast).